Here is a 197-residue protein sequence, read N- to C-terminus: MSEFQKLVIIDAKGHLMGRLASTVAKQLLAGQKVVVVRCEELNISGHFFRNKLKYLAYLRKACRYNPSRGAFHFRAPSRIFTKAVRGMLPHKTTRGNIALKNLQALEGIPPPFDKQKRLVVPAALRVLRLKPSRKYCTIGRLSSEVGWKYKNIVSKLEERRKIKSAAFYQAKSANQKHINVAKTKSSVNEKLAVFGY.

This sequence belongs to the universal ribosomal protein uL13 family. As to quaternary structure, component of the large ribosomal subunit (LSU). Mature yeast ribosomes consist of a small (40S) and a large (60S) subunit. The 40S small subunit contains 1 molecule of ribosomal RNA (18S rRNA) and at least 33 different proteins. The large 60S subunit contains 3 rRNA molecules (25S, 5.8S and 5S rRNA) and at least 46 different proteins.

It localises to the cytoplasm. It is found in the nucleus. Its subcellular location is the nucleolus. Its function is as follows. Component of the ribosome, a large ribonucleoprotein complex responsible for the synthesis of proteins in the cell. The small ribosomal subunit (SSU) binds messenger RNAs (mRNAs) and translates the encoded message by selecting cognate aminoacyl-transfer RNA (tRNA) molecules. The large subunit (LSU) contains the ribosomal catalytic site termed the peptidyl transferase center (PTC), which catalyzes the formation of peptide bonds, thereby polymerizing the amino acids delivered by tRNAs into a polypeptide chain. The nascent polypeptides leave the ribosome through a tunnel in the LSU and interact with protein factors that function in enzymatic processing, targeting, and the membrane insertion of nascent chains at the exit of the ribosomal tunnel. In Schizosaccharomyces pombe (strain 972 / ATCC 24843) (Fission yeast), this protein is Large ribosomal subunit protein uL13C (rpl1603).